Here is a 360-residue protein sequence, read N- to C-terminus: 3-dehydroquinate synthase (360 aa).

NAD(+)-binding positions include 105–109 (GVVGD), 129–130 (TT), K142, K151, and 169–172 (TLKT). Zn(2+) is bound by residues E184, H247, and H263.

It belongs to the sugar phosphate cyclases superfamily. Dehydroquinate synthase family. Co(2+) serves as cofactor. It depends on Zn(2+) as a cofactor. Requires NAD(+) as cofactor.

It is found in the cytoplasm. It catalyses the reaction 7-phospho-2-dehydro-3-deoxy-D-arabino-heptonate = 3-dehydroquinate + phosphate. Its pathway is metabolic intermediate biosynthesis; chorismate biosynthesis; chorismate from D-erythrose 4-phosphate and phosphoenolpyruvate: step 2/7. In terms of biological role, catalyzes the conversion of 3-deoxy-D-arabino-heptulosonate 7-phosphate (DAHP) to dehydroquinate (DHQ). This Acetivibrio thermocellus (strain ATCC 27405 / DSM 1237 / JCM 9322 / NBRC 103400 / NCIMB 10682 / NRRL B-4536 / VPI 7372) (Clostridium thermocellum) protein is 3-dehydroquinate synthase.